The primary structure comprises 366 residues: MLERRYLVLEDGTYYEGYKLGSNDLSVGEIVFNTAMTGYQETISDPSYTGQIITFTYPLIGNYGINRDDFEALTPTLNGVVVKEASTHPSNFRNQKTLHDVLVQYKIPGISGVDTRSITRKIRQHGVLKAGFTDNRDDIDSLINTLKSTELPRDEVETVSTKTPYVSTGSDLSVVLLDFGKKQNIVRELNMRGCNVTVVPYNTTAEEILAMSPDGVMLSNGPGDPDVVEVAIEMIKGILGKIPFFGICLGHQLFALSQGGTSFKMKFGHRGANHPVKDLRSGKVDITSQNHGYAIDKNSLVNTDLEVTHIALNDGTVEGLRHKTLPAFSVQYHPEARPGPSDSNYLFDEFMTMMKEFKEKEQTANA.

The segment at 1–171 (MLERRYLVLE…KTPYVSTGSD (171 aa)) is CPSase. Ser47, Gly221, and Gly223 together coordinate L-glutamine. One can recognise a Glutamine amidotransferase type-1 domain in the interval 173-360 (SVVLLDFGKK…MTMMKEFKEK (188 aa)). Cys248 serves as the catalytic Nucleophile. The L-glutamine site is built by Leu249, Gln252, Asn290, Gly292, and Tyr293. Catalysis depends on residues His333 and Glu335.

Belongs to the CarA family. As to quaternary structure, composed of two chains; the small (or glutamine) chain promotes the hydrolysis of glutamine to ammonia, which is used by the large (or ammonia) chain to synthesize carbamoyl phosphate. Tetramer of heterodimers (alpha,beta)4.

The catalysed reaction is hydrogencarbonate + L-glutamine + 2 ATP + H2O = carbamoyl phosphate + L-glutamate + 2 ADP + phosphate + 2 H(+). It carries out the reaction L-glutamine + H2O = L-glutamate + NH4(+). Its pathway is amino-acid biosynthesis; L-arginine biosynthesis; carbamoyl phosphate from bicarbonate: step 1/1. It participates in pyrimidine metabolism; UMP biosynthesis via de novo pathway; (S)-dihydroorotate from bicarbonate: step 1/3. In terms of biological role, small subunit of the glutamine-dependent carbamoyl phosphate synthetase (CPSase). CPSase catalyzes the formation of carbamoyl phosphate from the ammonia moiety of glutamine, carbonate, and phosphate donated by ATP, constituting the first step of 2 biosynthetic pathways, one leading to arginine and/or urea and the other to pyrimidine nucleotides. The small subunit (glutamine amidotransferase) binds and cleaves glutamine to supply the large subunit with the substrate ammonia. This Staphylococcus haemolyticus (strain JCSC1435) protein is Carbamoyl phosphate synthase small chain.